The following is a 370-amino-acid chain: Cobalt-precorrin-5B C(1)-methyltransferase (370 aa).

Belongs to the CbiD family.

The catalysed reaction is Co-precorrin-5B + S-adenosyl-L-methionine = Co-precorrin-6A + S-adenosyl-L-homocysteine. The protein operates within cofactor biosynthesis; adenosylcobalamin biosynthesis; cob(II)yrinate a,c-diamide from sirohydrochlorin (anaerobic route): step 6/10. In terms of biological role, catalyzes the methylation of C-1 in cobalt-precorrin-5B to form cobalt-precorrin-6A. The sequence is that of Cobalt-precorrin-5B C(1)-methyltransferase from Pseudomonas savastanoi pv. phaseolicola (strain 1448A / Race 6) (Pseudomonas syringae pv. phaseolicola (strain 1448A / Race 6)).